Here is a 240-residue protein sequence, read N- to C-terminus: Uridylate kinase (240 aa).

Residues 15–18 (KISG), glycine 58, and arginine 62 each bind ATP. UMP is bound by residues aspartate 77 and 138 to 145 (TGNPLFTT). 3 residues coordinate ATP: threonine 165, tyrosine 171, and aspartate 174.

Belongs to the UMP kinase family. Homohexamer.

The protein localises to the cytoplasm. It catalyses the reaction UMP + ATP = UDP + ADP. It functions in the pathway pyrimidine metabolism; CTP biosynthesis via de novo pathway; UDP from UMP (UMPK route): step 1/1. Inhibited by UTP. In terms of biological role, catalyzes the reversible phosphorylation of UMP to UDP. This Buchnera aphidicola subsp. Schizaphis graminum (strain Sg) protein is Uridylate kinase.